The primary structure comprises 642 residues: Mini-chromosome maintenance complex-binding protein (642 aa).

Polar residues predominate over residues 151–161 (ARVSPSTSYTP). Residues 151-188 (ARVSPSTSYTPSRHKRSYEDDEDMDLQPNKQKDQHMGA) form a disordered region. Ser154 is modified (phosphoserine). Position 160 is a phosphothreonine (Thr160). A phosphoserine mark is found at Ser167 and Ser298.

It belongs to the MCMBP family. In terms of assembly, interacts with the MCM complex: associates with the MCM3-7 complex which lacks MCM2, while it does not interact with the MCM complex when MCM2 is present (MCM2-7 complex). Interacts with the RPA complex, when composed of all RPA1, RPA2 and RPA3 components, but not with RPA1 or RPA2 alone.

The protein resides in the nucleus. Associated component of the MCM complex that acts as a regulator of DNA replication. Binds to the MCM complex during late S phase and promotes the disassembly of the MCM complex from chromatin, thereby acting as a key regulator of pre-replication complex (pre-RC) unloading from replicated DNA. Can dissociate the MCM complex without addition of ATP; probably acts by destabilizing interactions of each individual subunits of the MCM complex. Required for sister chromatid cohesion. This is Mini-chromosome maintenance complex-binding protein (MCMBP) from Bos taurus (Bovine).